The chain runs to 137 residues: Protein Flattop homolog (137 aa).

This sequence belongs to the Flattop family.

It localises to the cytoplasm. Its subcellular location is the cytoskeleton. The protein resides in the flagellum axoneme. Its function is as follows. Microtubule inner protein (MIP) part of the dynein-decorated doublet microtubules (DMTs) in cilia axoneme. Acts as a regulator of cilium basal body docking and positioning in mono- and multiciliated cells. Regulates basal body docking and cilia formation in multiciliated lung cells. Regulates kinocilium positioning and stereocilia bundle morphogenesis in the inner ear. The protein is Protein Flattop homolog of Chlamydomonas reinhardtii (Chlamydomonas smithii).